A 369-amino-acid chain; its full sequence is Peptide chain release factor 1 (369 aa).

N5-methylglutamine is present on Gln238.

It belongs to the prokaryotic/mitochondrial release factor family. Post-translationally, methylated by PrmC. Methylation increases the termination efficiency of RF1.

The protein localises to the cytoplasm. Its function is as follows. Peptide chain release factor 1 directs the termination of translation in response to the peptide chain termination codons UAG and UAA. This is Peptide chain release factor 1 from Parabacteroides distasonis (strain ATCC 8503 / DSM 20701 / CIP 104284 / JCM 5825 / NCTC 11152).